The sequence spans 47 residues: Large ribosomal subunit protein bL34 (47 aa).

The protein belongs to the bacterial ribosomal protein bL34 family.

The protein is Large ribosomal subunit protein bL34 of Mycobacterium tuberculosis (strain ATCC 25177 / H37Ra).